The chain runs to 563 residues: Ribulokinase (563 aa).

Belongs to the ribulokinase family.

It catalyses the reaction D-ribulose + ATP = D-ribulose 5-phosphate + ADP + H(+). It carries out the reaction L-ribulose + ATP = L-ribulose 5-phosphate + ADP + H(+). The protein operates within carbohydrate degradation; L-arabinose degradation via L-ribulose; D-xylulose 5-phosphate from L-arabinose (bacterial route): step 2/3. The polypeptide is Ribulokinase (Mycolicibacterium smegmatis (Mycobacterium smegmatis)).